Consider the following 66-residue polypeptide: Phylloseptin-S3 (66 aa).

The N-terminal stretch at 1–22 is a signal peptide; that stretch reads MAFLKKSLFLVLFLGLVSLSIC. The propeptide occupies 23-46; that stretch reads EEEKRETEEEEHDQEEDDKSEEKR. The tract at residues 25–44 is disordered; it reads EKRETEEEEHDQEEDDKSEE. Residues 30-41 are compositionally biased toward acidic residues; sequence EEEEHDQEEDDK. Phenylalanine amide is present on F65.

This sequence belongs to the frog skin active peptide (FSAP) family. Phylloseptin subfamily. In terms of tissue distribution, expressed by the skin glands.

The protein resides in the secreted. It is found in the target cell membrane. In terms of biological role, antimicrobial peptide with activity against the Gram-positive S.pyogenes (MIC=12.5 uM), but not against all other bacteria tested (both Gram-positive and Gram-negative). Does not show activity against fungi, and against Leishmania species. This chain is Phylloseptin-S3, found in Phyllomedusa sauvagei (Sauvage's leaf frog).